Reading from the N-terminus, the 536-residue chain is Putative UDP-glucuronosyltransferase ugt-47 (536 aa).

A signal peptide spans 1 to 21; it reads MFRYHSILLLAILYFFEYGLA. Residues N52 and N308 are each glycosylated (N-linked (GlcNAc...) asparagine). Residues 497–517 traverse the membrane as a helical segment; sequence IIVPCFFVAFYFIIFPFFKLF.

Belongs to the UDP-glycosyltransferase family.

It is found in the membrane. It carries out the reaction glucuronate acceptor + UDP-alpha-D-glucuronate = acceptor beta-D-glucuronoside + UDP + H(+). The polypeptide is Putative UDP-glucuronosyltransferase ugt-47 (ugt-47) (Caenorhabditis elegans).